A 206-amino-acid chain; its full sequence is Superoxide dismutase [Mn] (206 aa).

Mn(2+) contacts are provided by His27, His82, Asp168, and His172.

It belongs to the iron/manganese superoxide dismutase family. Requires Mn(2+) as cofactor.

It carries out the reaction 2 superoxide + 2 H(+) = H2O2 + O2. Destroys superoxide anion radicals which are normally produced within the cells and which are toxic to biological systems. The polypeptide is Superoxide dismutase [Mn] (sodA) (Lactococcus lactis subsp. lactis (strain IL1403) (Streptococcus lactis)).